Consider the following 109-residue polypeptide: Small serum protein 2 (109 aa).

Residues 1-19 (MRVFFSLIIFSFMLATCQG) form the signal peptide. 5 cysteine pairs are disulfide-bonded: C21-C72, C39-C64, C59-C93, C62-C71, and C84-C107.

Forms a stable, non-covalent complex with serotriflin.

Its subcellular location is the secreted. In terms of biological role, may serve as a self-defense protein against the toxic effects of the snake venom during accidental envenomation. Does not show inhibitory activity towards brevilysin H6. The polypeptide is Small serum protein 2 (Protobothrops flavoviridis (Habu)).